The primary structure comprises 170 residues: Fimbrial protein (170 aa).

Residues 1–7 (MNTLQKG) constitute a propeptide, leader sequence. Phenylalanine 8 is modified (N-methylphenylalanine). A helical membrane pass occupies residues 8 to 28 (FTLIELMIVIAIVGILAAVAL). A glycan (O-linked (Gal...) serine) is linked at serine 70. Position 100 is an O-(sn-1-glycerophosphoryl)serine (serine 100). Cysteine 127 and cysteine 163 are oxidised to a cystine.

It belongs to the N-Me-Phe pilin family. In terms of assembly, the pili are polar flexible filaments of about 5.4 nanometers diameter and 2.5 micrometers average length; they consist of only a single polypeptide chain arranged in a helical configuration of five subunits per turn in the assembled pilus. Post-translationally, O-linked glycan has been reported to consist either of the Gal(alpha1-3) GlcNAc disaccharide, or the Gal(beta 1-4) Gal(alpha 1-3) 2,4-diacetamido-2,4,6-trideoxyhexose trisaccharide.

The protein resides in the fimbrium. It localises to the membrane. Major component of the type IV pilus (T4P) that plays a role in cellular adherence, microcolony formation as well as twitching motility. This chain is Fimbrial protein (pilE), found in Neisseria meningitidis serogroup B (strain ATCC BAA-335 / MC58).